A 162-amino-acid polypeptide reads, in one-letter code: ATP synthase subunit b 1 (162 aa).

The helical transmembrane segment at 1 to 21 (MLLTAEFWVAVAFVAFLVIVW) threads the bilayer.

Belongs to the ATPase B chain family. F-type ATPases have 2 components, F(1) - the catalytic core - and F(0) - the membrane proton channel. F(1) has five subunits: alpha(3), beta(3), gamma(1), delta(1), epsilon(1). F(0) has three main subunits: a(1), b(2) and c(10-14). The alpha and beta chains form an alternating ring which encloses part of the gamma chain. F(1) is attached to F(0) by a central stalk formed by the gamma and epsilon chains, while a peripheral stalk is formed by the delta and b chains.

It is found in the cell inner membrane. Its function is as follows. F(1)F(0) ATP synthase produces ATP from ADP in the presence of a proton or sodium gradient. F-type ATPases consist of two structural domains, F(1) containing the extramembraneous catalytic core and F(0) containing the membrane proton channel, linked together by a central stalk and a peripheral stalk. During catalysis, ATP synthesis in the catalytic domain of F(1) is coupled via a rotary mechanism of the central stalk subunits to proton translocation. Functionally, component of the F(0) channel, it forms part of the peripheral stalk, linking F(1) to F(0). The polypeptide is ATP synthase subunit b 1 (Methylorubrum populi (strain ATCC BAA-705 / NCIMB 13946 / BJ001) (Methylobacterium populi)).